Consider the following 254-residue polypeptide: PF03932 family protein CutC (254 aa).

It belongs to the CutC family.

Its subcellular location is the cytoplasm. In Yersinia pseudotuberculosis serotype O:1b (strain IP 31758), this protein is PF03932 family protein CutC.